Reading from the N-terminus, the 350-residue chain is Nicotinate-nucleotide--dimethylbenzimidazole phosphoribosyltransferase (350 aa).

The active-site Proton acceptor is the Glu-316.

Belongs to the CobT family.

The catalysed reaction is 5,6-dimethylbenzimidazole + nicotinate beta-D-ribonucleotide = alpha-ribazole 5'-phosphate + nicotinate + H(+). It functions in the pathway nucleoside biosynthesis; alpha-ribazole biosynthesis; alpha-ribazole from 5,6-dimethylbenzimidazole: step 1/2. In terms of biological role, catalyzes the synthesis of alpha-ribazole-5'-phosphate from nicotinate mononucleotide (NAMN) and 5,6-dimethylbenzimidazole (DMB). The polypeptide is Nicotinate-nucleotide--dimethylbenzimidazole phosphoribosyltransferase (Pseudomonas savastanoi pv. phaseolicola (strain 1448A / Race 6) (Pseudomonas syringae pv. phaseolicola (strain 1448A / Race 6))).